Consider the following 266-residue polypeptide: 3-deoxy-manno-octulosonate cytidylyltransferase 1 (266 aa).

It belongs to the KdsB family.

It localises to the cytoplasm. The enzyme catalyses 3-deoxy-alpha-D-manno-oct-2-ulosonate + CTP = CMP-3-deoxy-beta-D-manno-octulosonate + diphosphate. It functions in the pathway nucleotide-sugar biosynthesis; CMP-3-deoxy-D-manno-octulosonate biosynthesis; CMP-3-deoxy-D-manno-octulosonate from 3-deoxy-D-manno-octulosonate and CTP: step 1/1. Its pathway is bacterial outer membrane biogenesis; lipopolysaccharide biosynthesis. Its function is as follows. Activates KDO (a required 8-carbon sugar) for incorporation into bacterial lipopolysaccharide in Gram-negative bacteria. In Paraburkholderia phytofirmans (strain DSM 17436 / LMG 22146 / PsJN) (Burkholderia phytofirmans), this protein is 3-deoxy-manno-octulosonate cytidylyltransferase 1.